The primary structure comprises 48 residues: Cuticle protein 5.1 (48 aa).

Its function is as follows. Component of the cuticle of migratory locust which contains more than 100 different structural proteins. This Locusta migratoria (Migratory locust) protein is Cuticle protein 5.1.